Reading from the N-terminus, the 336-residue chain is Foldase protein PrsA (336 aa).

The N-terminal stretch at 1 to 22 (MKSAKKLLSVLCLGIFILTFTA) is a signal peptide. Cys-23 is lipidated: N-palmitoyl cysteine. The S-diacylglycerol cysteine moiety is linked to residue Cys-23. Residues 194–286 (PNTMNVSHIL…FGYHIIKINS (93 aa)) enclose the PpiC domain.

This sequence belongs to the PrsA family.

The protein localises to the cell membrane. It carries out the reaction [protein]-peptidylproline (omega=180) = [protein]-peptidylproline (omega=0). Its function is as follows. Plays a major role in protein secretion by helping the post-translocational extracellular folding of several secreted proteins. The sequence is that of Foldase protein PrsA from Clostridium botulinum (strain Okra / Type B1).